Here is a 195-residue protein sequence, read N- to C-terminus: Transcription repressor OFP17 (195 aa).

In terms of domain architecture, OVATE spans 130–190 (EDNAVEDACR…SRFYGELCRD (61 aa)).

The protein resides in the nucleus. Transcriptional repressor that may regulate multiple aspects of plant growth and development through the regulation of BEL1-LIKE (BLH) and KNOX TALE (KNAT) homeodomain transcription factors. This Arabidopsis thaliana (Mouse-ear cress) protein is Transcription repressor OFP17 (OFP17).